The chain runs to 305 residues: Protein FdhE homolog (305 aa).

This sequence belongs to the FdhE family.

The protein resides in the cytoplasm. Functionally, necessary for formate dehydrogenase activity. The sequence is that of Protein FdhE homolog from Stutzerimonas stutzeri (strain A1501) (Pseudomonas stutzeri).